A 267-amino-acid chain; its full sequence is Large ribosomal subunit protein uL2c (267 aa).

It belongs to the universal ribosomal protein uL2 family. Part of the 50S ribosomal subunit.

It localises to the plastid. The protein resides in the apicoplast. This is Large ribosomal subunit protein uL2c (rpl2) from Toxoplasma gondii.